A 401-amino-acid chain; its full sequence is Keratin-associated protein 10-4 (401 aa).

35 consecutive repeat copies span residues 36 to 40 (CCEPP), 41 to 45 (CCAPS), 46 to 50 (CCAPA), 67 to 71 (CCPVT), 89 to 93 (CCQQS), 99 to 103 (CCASS), 109 to 113 (CCVPV), 114 to 118 (CCKTV), 119 to 123 (CCKPV), 124 to 128 (CCVPV), 129 to 133 (CCGDS), 135 to 139 (CCQQS), 145 to 149 (CCTSS), 155 to 159 (CCVPI), 160 to 164 (CCKPV), 172 to 176 (CCQQS), 186 to 190 (CCQAV), 208 to 212 (CCQQS), 218 to 222 (CCTSS), 228 to 232 (CCVPV), 233 to 237 (CCKTV), 238 to 242 (CCKPV), 250 to 254 (CCQQS), 270 to 274 (CCVPV), 275 to 279 (CCKPV), 280 to 284 (CCKPV), 297 to 301 (CCQQS), 307 to 311 (CCTSS), 317 to 321 (CCVPV), 322 to 326 (CCKPV), 339 to 343 (CCQQS), 349 to 353 (CCTTS), 354 to 358 (CCRPS), 373 to 377 (CCVPV), and 391 to 395 (CCRPA). Residues 36–395 (CCEPPCCAPS…SCQPSCCRPA (360 aa)) form a 36 X 5 AA repeats of C-C-X(3) region.

This sequence belongs to the KRTAP type 10 family. In terms of assembly, interacts with hair keratins. In terms of tissue distribution, restricted to hair root, not detected in any other tissues.

Functionally, in the hair cortex, hair keratin intermediate filaments are embedded in an interfilamentous matrix, consisting of hair keratin-associated proteins (KRTAP), which are essential for the formation of a rigid and resistant hair shaft through their extensive disulfide bond cross-linking with abundant cysteine residues of hair keratins. The matrix proteins include the high-sulfur and high-glycine-tyrosine keratins. The polypeptide is Keratin-associated protein 10-4 (KRTAP10-4) (Homo sapiens (Human)).